Consider the following 194-residue polypeptide: A-type ATP synthase subunit E (194 aa).

It belongs to the V-ATPase E subunit family. As to quaternary structure, has multiple subunits with at least A(3), B(3), C, D, E, F, H, I and proteolipid K(x).

Its subcellular location is the cell membrane. Component of the A-type ATP synthase that produces ATP from ADP in the presence of a proton gradient across the membrane. The chain is A-type ATP synthase subunit E from Haloferax volcanii (strain ATCC 29605 / DSM 3757 / JCM 8879 / NBRC 14742 / NCIMB 2012 / VKM B-1768 / DS2) (Halobacterium volcanii).